The chain runs to 329 residues: Transcription factor RAX1 (329 aa).

2 consecutive HTH myb-type domains span residues 9–62 and 63–117; these read KTKV…LNYL and RPNI…RKKL. DNA-binding regions (H-T-H motif) lie at residues 38-62 and 90-113; these read WISF…LNYL and WSII…NTKL. Composition is skewed to low complexity over residues 122–131 and 144–154; these read SDSSSSAMAS and PTSPTTIPSSS. The tract at residues 122–162 is disordered; it reads SDSSSSAMASPYLNPISQDVKRPTSPTTIPSSSYNPYAENP.

Mostly expressed in roots. Also present in shoot tips and flower buds.

The protein localises to the nucleus. In terms of biological role, transcription activator of genes involved in the regulation of meristematic competence, such as CUC2. Positively regulates axillary meristems (AMs) formation and development, especially at early phases of vegetative growth, probably by specifying a stem cell niche for AM formation. Modulates the negative regulation mediated by gibberellic acid on the timing of developmental phase transitions. This Arabidopsis thaliana (Mouse-ear cress) protein is Transcription factor RAX1 (RAX1).